We begin with the raw amino-acid sequence, 561 residues long: MTTLKITGMTCDSCAAHVKEALEKVPGVQSALVSYPKGTAQLAIEAGTSSDALTTAVAGLGYEATLADAPPTDNRAGLLDKMRGWIGAADKPSGNERPLQVVVIGSGGAAMAAALKAVEQGAHVSLIERGTIGGTCVNVGCVPSKIMIRAAHIAHLRRESPFDGGIAATVPAIDRSKLLAQQQARVEELRHAKYEGILDGNPAITVVHGEARFKDEQSLVVRLNDGGERVVAFDRCLVATGASPAVPPIPGLKESPYWTSTEALVSDTLPERLAVIGSSVVALELAQAFARLGSQVTILARNTLFFRDDPAIGEAVTAAFRAEGIKVLEHTQASQVAHVDGEFVLTTGYGEIRADQLLVATGRAPNTRSLALEAAGVAANAQGAIVIDKGMRTSTPHIYAAGDCTDQPQFVYVAAAAGTRAAINMTGGDAALDLTAMPAVVFTDPQVATVGYSEAEAHHDGIETDSRTLTLDNVPRALANFDTRGFIKLVIEEGSGRLIGVQAVAPEAGELIQTAVLAIRNRMTVQELADQLFPYLTMVEGLKLAAQTFSKDVKQLSCCAG.

Residues 1–65 (MTTLKITGMT…AVAGLGYEAT (65 aa)) enclose the HMA domain. Positions 11 and 14 each coordinate a metal cation. Ala-110, Gly-130, and Thr-135 together coordinate FAD. Cys-136 and Cys-141 form a disulfide bridge. Residues Lys-145, Ala-211, Asp-403, and Val-411 each coordinate FAD. Residues Cys-558 and Cys-559 each contribute to the Hg(2+) site.

It belongs to the class-I pyridine nucleotide-disulfide oxidoreductase family. Homodimer. FAD serves as cofactor.

The catalysed reaction is Hg + NADP(+) + H(+) = Hg(2+) + NADPH. Resistance to Hg(2+) in bacteria appears to be governed by a specialized system which includes mercuric reductase. MerA protein is responsible for volatilizing mercury as Hg(0). This chain is Mercuric reductase (merA), found in Acinetobacter calcoaceticus.